Reading from the N-terminus, the 379-residue chain is dTDP-3-amino-3,4,6-trideoxy-alpha-D-glucose transaminase (379 aa).

Pyridoxal 5'-phosphate is bound by residues glycine 67, glutamine 167, 188–193 (SFYPGK), tyrosine 221, tyrosine 227, 235–237 (NSR), and tyrosine 318. The residue at position 193 (lysine 193) is an N6-(pyridoxal phosphate)lysine.

This sequence belongs to the degT/dnrJ/eryC1 family. As to quaternary structure, homodimer. It depends on pyridoxal 5'-phosphate as a cofactor.

The catalysed reaction is dTDP-3-amino-3,4,6-trideoxy-alpha-D-glucose + 2-oxoglutarate = dTDP-3-dehydro-4,6-dideoxy-alpha-D-glucose + L-glutamate. It participates in antibiotic biosynthesis. Involved in the biosynthesis of dTDP-alpha-D-desosamine, a sugar found in several bacterial macrolide antibiotics. Catalyzes the reversible transfer of the amino group from L-glutamate to the C-3 position of dTDP-3-keto-4,6-deoxyglucose to yield dTDP-3-amino-3,4,6-trideoxyglucose. The chain is dTDP-3-amino-3,4,6-trideoxy-alpha-D-glucose transaminase from Streptomyces venezuelae.